The following is a 40-amino-acid chain: Cytolysin EnT (40 aa).

Residues A3–A12 are plays an important role in the hemolytic activity. The segment at G11–S30 is N-terminal region.

The protein belongs to the actinoporin family. Sea anemone subfamily. As to quaternary structure, octamer or nonamer in membranes. Monomer in the soluble state.

Its subcellular location is the secreted. The protein resides in the nematocyst. The protein localises to the target cell membrane. Its function is as follows. Pore-forming protein that forms cations-selective hydrophilic pores of around 1 nm and causes cytolysis. Pore formation is a multi-step process that involves specific recognition of membrane sphingomyelin (but neither cholesterol nor phosphatidylcholine) using aromatic rich region and adjacent phosphocholine (POC) binding site, firm binding to the membrane (mainly driven by hydrophobic interactions) accompanied by the transfer of the N-terminal region to the lipid-water interface and finally pore formation after oligomerization of monomers. This toxin shows hemolytic activities. The protein is Cytolysin EnT of Entacmaea quadricolor (Bubble-tip anemone).